The following is a 90-amino-acid chain: U7-theraphotoxin-Hhn1j (90 aa).

The N-terminal stretch at M1–S19 is a signal peptide. Positions F20 to E50 are excised as a propeptide. 3 disulfides stabilise this stretch: C51/C65, C58/C70, and C64/C81.

It belongs to the neurotoxin 10 (Hwtx-1) family. 13 (Hntx-13) subfamily. As to expression, expressed by the venom gland.

It localises to the secreted. Functionally, ion channel inhibitor. The polypeptide is U7-theraphotoxin-Hhn1j (Cyriopagopus hainanus (Chinese bird spider)).